We begin with the raw amino-acid sequence, 311 residues long: MTRLIFMGTPQFSATVLQGLLENPAYDILAVVTQPDRAVGRKKDITMTPVKKLALAHQLPVFQPEKLSGSQELADIMALGADGIVTAAFGQFLPTVLLDSVTFAVNVHASLLPKYRGGAPIHYAIINGDKEAGVTIMEMVKEMDAGDMISSASLPILDTDNVGTMFDKLAILGRDLLLKTLPDYLSGDLKPVPQDHSQATFSPNLSAEEERLDWSKPAREVFNHIRGMNPWPVAHTLLDGQRFKIYEAELAEGSGSAGQIIAKTKKALVVAAGEGALSLTLVQPAGKPKMPIVDFLNGIGRSLEVGDVLGE.

A (6S)-5,6,7,8-tetrahydrofolate-binding site is contributed by 110–113 (SLLP).

It belongs to the Fmt family.

The catalysed reaction is L-methionyl-tRNA(fMet) + (6R)-10-formyltetrahydrofolate = N-formyl-L-methionyl-tRNA(fMet) + (6S)-5,6,7,8-tetrahydrofolate + H(+). In terms of biological role, attaches a formyl group to the free amino group of methionyl-tRNA(fMet). The formyl group appears to play a dual role in the initiator identity of N-formylmethionyl-tRNA by promoting its recognition by IF2 and preventing the misappropriation of this tRNA by the elongation apparatus. The polypeptide is Methionyl-tRNA formyltransferase (Streptococcus equi subsp. zooepidemicus (strain H70)).